Reading from the N-terminus, the 308-residue chain is Probable GTP 3',8-cyclase (308 aa).

Positions R4–R222 constitute a Radical SAM core domain. Residue R13 coordinates GTP. 3 residues coordinate [4Fe-4S] cluster: C20, C24, and C27. A GTP-binding site is contributed by K60. G64 provides a ligand contact to S-adenosyl-L-methionine. T90 is a GTP binding site. Residue S114 participates in S-adenosyl-L-methionine binding. GTP is bound at residue K151. Positions 245 and 248 each coordinate [4Fe-4S] cluster. R250–R252 is a binding site for GTP. [4Fe-4S] cluster is bound at residue C262.

This sequence belongs to the radical SAM superfamily. MoaA family. The cofactor is [4Fe-4S] cluster.

It catalyses the reaction GTP + AH2 + S-adenosyl-L-methionine = (8S)-3',8-cyclo-7,8-dihydroguanosine 5'-triphosphate + 5'-deoxyadenosine + L-methionine + A + H(+). It functions in the pathway cofactor biosynthesis; molybdopterin biosynthesis. Functionally, catalyzes the cyclization of GTP to (8S)-3',8-cyclo-7,8-dihydroguanosine 5'-triphosphate. In Saccharolobus solfataricus (strain ATCC 35092 / DSM 1617 / JCM 11322 / P2) (Sulfolobus solfataricus), this protein is Probable GTP 3',8-cyclase.